We begin with the raw amino-acid sequence, 194 residues long: Crossover junction endodeoxyribonuclease RuvC (194 aa).

Catalysis depends on residues Asp-8, Glu-72, and Asp-144. Mg(2+) is bound by residues Asp-8, Glu-72, and Asp-144.

The protein belongs to the RuvC family. Homodimer which binds Holliday junction (HJ) DNA. The HJ becomes 2-fold symmetrical on binding to RuvC with unstacked arms; it has a different conformation from HJ DNA in complex with RuvA. In the full resolvosome a probable DNA-RuvA(4)-RuvB(12)-RuvC(2) complex forms which resolves the HJ. The cofactor is Mg(2+).

The protein resides in the cytoplasm. The enzyme catalyses Endonucleolytic cleavage at a junction such as a reciprocal single-stranded crossover between two homologous DNA duplexes (Holliday junction).. In terms of biological role, the RuvA-RuvB-RuvC complex processes Holliday junction (HJ) DNA during genetic recombination and DNA repair. Endonuclease that resolves HJ intermediates. Cleaves cruciform DNA by making single-stranded nicks across the HJ at symmetrical positions within the homologous arms, yielding a 5'-phosphate and a 3'-hydroxyl group; requires a central core of homology in the junction. The consensus cleavage sequence is 5'-(A/T)TT(C/G)-3'. Cleavage occurs on the 3'-side of the TT dinucleotide at the point of strand exchange. HJ branch migration catalyzed by RuvA-RuvB allows RuvC to scan DNA until it finds its consensus sequence, where it cleaves and resolves the cruciform DNA. This Psychrobacter sp. (strain PRwf-1) protein is Crossover junction endodeoxyribonuclease RuvC.